The primary structure comprises 513 residues: ATP synthase subunit alpha (513 aa).

169–176 is a binding site for ATP; sequence GDRQTGKT.

It belongs to the ATPase alpha/beta chains family. In terms of assembly, F-type ATPases have 2 components, CF(1) - the catalytic core - and CF(0) - the membrane proton channel. CF(1) has five subunits: alpha(3), beta(3), gamma(1), delta(1), epsilon(1). CF(0) has three main subunits: a(1), b(2) and c(9-12). The alpha and beta chains form an alternating ring which encloses part of the gamma chain. CF(1) is attached to CF(0) by a central stalk formed by the gamma and epsilon chains, while a peripheral stalk is formed by the delta and b chains.

Its subcellular location is the cell inner membrane. It carries out the reaction ATP + H2O + 4 H(+)(in) = ADP + phosphate + 5 H(+)(out). Its function is as follows. Produces ATP from ADP in the presence of a proton gradient across the membrane. The alpha chain is a regulatory subunit. This chain is ATP synthase subunit alpha, found in Vesicomyosocius okutanii subsp. Calyptogena okutanii (strain HA).